Here is a 295-residue protein sequence, read N- to C-terminus: Glycine--tRNA ligase alpha subunit (295 aa).

It belongs to the class-II aminoacyl-tRNA synthetase family. Tetramer of two alpha and two beta subunits.

It localises to the cytoplasm. The enzyme catalyses tRNA(Gly) + glycine + ATP = glycyl-tRNA(Gly) + AMP + diphosphate. This is Glycine--tRNA ligase alpha subunit (glyQ) from Bacillus subtilis (strain 168).